The primary structure comprises 330 residues: Clavaminate synthase-like protein At3g21360 (330 aa).

Ala2 is modified (N-acetylalanine). His120, Glu122, and His313 together coordinate Fe cation.

It depends on Fe cation as a cofactor.

This is Clavaminate synthase-like protein At3g21360 from Arabidopsis thaliana (Mouse-ear cress).